Here is a 396-residue protein sequence, read N- to C-terminus: L-lactate dehydrogenase (396 aa).

Residues 1–380 (MIISAASDYR…TQDSLVQGLG (380 aa)) form the FMN hydroxy acid dehydrogenase domain. Residue tyrosine 24 coordinates substrate. Serine 106 and glutamine 127 together coordinate FMN. Tyrosine 129 contributes to the substrate binding site. Residue threonine 155 participates in FMN binding. Residue arginine 164 coordinates substrate. Lysine 251 contacts FMN. Histidine 275 serves as the catalytic Proton acceptor. Position 278 (arginine 278) interacts with substrate. 306 to 330 (DSGIRNGLDVVRMIALGADTILLGR) provides a ligand contact to FMN.

The protein belongs to the FMN-dependent alpha-hydroxy acid dehydrogenase family. Requires FMN as cofactor.

The protein resides in the cell inner membrane. The catalysed reaction is (S)-lactate + A = pyruvate + AH2. Catalyzes the conversion of L-lactate to pyruvate. Is coupled to the respiratory chain. The sequence is that of L-lactate dehydrogenase from Escherichia coli O81 (strain ED1a).